Consider the following 244-residue polypeptide: Cysteine-rich secretory protein 1 (244 aa).

Positions 1-19 (MALMLVLFFLAAVLPPSLL) are cleaved as a signal peptide. The SCP domain maps to 44–170 (SKHNQLRRMV…PLRYYYVCHY (127 aa)). Asparagine 145 carries an N-linked (GlcNAc...) asparagine glycan. 5 disulfides stabilise this stretch: cysteine 190/cysteine 197, cysteine 193/cysteine 202, cysteine 206/cysteine 239, cysteine 215/cysteine 233, and cysteine 224/cysteine 237. The ShKT domain maps to 206–239 (CGHEDKYTNCKYLKKMLSCEHELLKKGCKATCLC).

This sequence belongs to the CRISP family. In terms of tissue distribution, mainly found in the cauda epididymis where it is synthesized by the principal cells and secreted into the lumen. Binds to the heads of spermatozoa. Also expressed in the submandibular gland.

The protein localises to the cytoplasmic vesicle. The protein resides in the secretory vesicle. Its function is as follows. This protein is supposed to help spermatozoa undergo functional maturation while they move from the testis to the ductus deferens. This is Cysteine-rich secretory protein 1 (Crisp1) from Mus musculus (Mouse).